The sequence spans 1434 residues: Ankyrin and armadillo repeat-containing protein (1434 aa).

A helical transmembrane segment spans residues 309-329 (IRRGIGYLKLICFLIPFLLSL). ANK repeat units follow at residues 532 to 561 (AGYT…KVNQ), 569 to 598 (QGPT…DYTL), 602 to 631 (RGWM…SLLE), 638 to 667 (NQCT…NWRK), and 671 to 701 (KGNN…ELPV). ARM repeat units lie at residues 732–771 (DQYW…NIST), 773–812 (KSAV…DIAQ), 814–852 (ENKD…VLCI), 855–894 (ENNQ…EVGR), 897–936 (KEIQ…SLAS), and 1072–1112 (PVSQ…CIVL).

In terms of tissue distribution, ubiquitously expressed with highest level in pancreas and lowest in skeletal muscle.

Its subcellular location is the membrane. The protein is Ankyrin and armadillo repeat-containing protein (ANKAR) of Homo sapiens (Human).